A 169-amino-acid chain; its full sequence is Ribosome maturation factor RimM (169 aa).

The PRC barrel domain maps to 97–169 (EDEYYWTDLV…TITADWGLDY (73 aa)).

Belongs to the RimM family. Binds ribosomal protein uS19.

It localises to the cytoplasm. In terms of biological role, an accessory protein needed during the final step in the assembly of 30S ribosomal subunit, possibly for assembly of the head region. Essential for efficient processing of 16S rRNA. May be needed both before and after RbfA during the maturation of 16S rRNA. It has affinity for free ribosomal 30S subunits but not for 70S ribosomes. This Neisseria meningitidis serogroup B (strain ATCC BAA-335 / MC58) protein is Ribosome maturation factor RimM.